A 166-amino-acid polypeptide reads, in one-letter code: Ribosome-binding factor A (166 aa).

The segment at 122 to 166 (HVADETDVEDSTDHEDDVTNSEDETKHVDIDTDSEEGTNTDGKAQ) is disordered. The segment covering 126-143 (ETDVEDSTDHEDDVTNSE) has biased composition (acidic residues).

The protein belongs to the RbfA family. Monomer. Binds 30S ribosomal subunits, but not 50S ribosomal subunits or 70S ribosomes.

Its subcellular location is the cytoplasm. Its function is as follows. One of several proteins that assist in the late maturation steps of the functional core of the 30S ribosomal subunit. Associates with free 30S ribosomal subunits (but not with 30S subunits that are part of 70S ribosomes or polysomes). Required for efficient processing of 16S rRNA. May interact with the 5'-terminal helix region of 16S rRNA. The sequence is that of Ribosome-binding factor A from Pseudoalteromonas translucida (strain TAC 125).